The chain runs to 345 residues: MRRFFYTHSRGVTEVVVGRGIPYDKYVERPVVLIEEGLENPLPNAPALALKGGEGVKSLEALSKVYVFLQEAEADRGSTLVAVGGGALLDLATFAAGTYMRGIGLVQVPTTLLAMVDAALGGKGAVDWGLVKNLVGVFYQPKAILCDLEWLRSLPPRVYRSAFAEVVKYGLALDEEFYSWLRQSTTALLNRGEDALEEAVYRSLKLKASVVEADEFEERGIRQVLNVGHTVGHALERVLGLLHGEAVSLGIAAELRLSAELGYLREKYVEETKSLLKAFELPTEAGLSSEQLAAAKGLIKYDKKRRRDYVYLPLVIRPGKWILERLRVEEVARAVEYVVPQGRTA.

Residues 86–90 (GALLD), 110–111 (TT), K123, and K132 each bind NAD(+). Zn(2+)-binding residues include E165, H229, and H243.

It belongs to the sugar phosphate cyclases superfamily. Dehydroquinate synthase family. NAD(+) is required as a cofactor. It depends on Co(2+) as a cofactor. The cofactor is Zn(2+).

Its subcellular location is the cytoplasm. The enzyme catalyses 7-phospho-2-dehydro-3-deoxy-D-arabino-heptonate = 3-dehydroquinate + phosphate. Its pathway is metabolic intermediate biosynthesis; chorismate biosynthesis; chorismate from D-erythrose 4-phosphate and phosphoenolpyruvate: step 2/7. Functionally, catalyzes the conversion of 3-deoxy-D-arabino-heptulosonate 7-phosphate (DAHP) to dehydroquinate (DHQ). The sequence is that of 3-dehydroquinate synthase from Pyrobaculum aerophilum (strain ATCC 51768 / DSM 7523 / JCM 9630 / CIP 104966 / NBRC 100827 / IM2).